The chain runs to 63 residues: Large ribosomal subunit protein bL28 (63 aa).

This sequence belongs to the bacterial ribosomal protein bL28 family.

In Geotalea uraniireducens (strain Rf4) (Geobacter uraniireducens), this protein is Large ribosomal subunit protein bL28.